The sequence spans 266 residues: Dihydropteroate synthase (266 aa).

The region spanning 12-260 (AAIMGILNVT…DVKANQDIVA (249 aa)) is the Pterin-binding domain. Residue asparagine 19 participates in Mg(2+) binding. Residues threonine 59, aspartate 93, asparagine 112, aspartate 176, lysine 212, and 248-250 (RVH) contribute to the (7,8-dihydropterin-6-yl)methyl diphosphate site.

The protein belongs to the DHPS family. In terms of assembly, homodimer or homotrimer. Mg(2+) serves as cofactor.

The catalysed reaction is (7,8-dihydropterin-6-yl)methyl diphosphate + 4-aminobenzoate = 7,8-dihydropteroate + diphosphate. It functions in the pathway cofactor biosynthesis; tetrahydrofolate biosynthesis; 7,8-dihydrofolate from 2-amino-4-hydroxy-6-hydroxymethyl-7,8-dihydropteridine diphosphate and 4-aminobenzoate: step 1/2. Its function is as follows. Catalyzes the condensation of para-aminobenzoate (pABA) with 6-hydroxymethyl-7,8-dihydropterin diphosphate (DHPt-PP) to form 7,8-dihydropteroate (H2Pte), the immediate precursor of folate derivatives. The protein is Dihydropteroate synthase (folP) of Streptococcus pyogenes serotype M6 (strain ATCC BAA-946 / MGAS10394).